The following is a 346-amino-acid chain: MERLGQPAYRSRQLWQGLYRDRIASLDQFTTLPIPLREELKSSGWAIAFPFVQKRFTSTDGTVRYLLQFSDGQSVETVWMPEGDGGEQGDGSEDGPSYDRATICVSSQVGCAVDCQFCMTALLGLLRNLSAGEIVGQILAVLKDENVDVEKSRINLVFMGQGEPFLNFDNFVKAVTLLAEAVGIPESRMTVSTSGIVPRIVDFGQLAIRPKLAISLNASNDESRRELMPITKKWTLEKLMSAAREFPLRNRERMTFEYVLLGGVNDSEQNAREVVQLLRGLRAKVNLIAWNPGPEIPFSTPDPQHVEAFQQILIDAGIPTFIRKPRGRDIFAACGQLKRTELVTLS.

The active-site Proton acceptor is the Glu-76. A Radical SAM core domain is found at 97 to 329 (SYDRATICVS…TFIRKPRGRD (233 aa)). The cysteines at positions 104 and 334 are disulfide-linked. Positions 111, 115, and 118 each coordinate [4Fe-4S] cluster. Residues 162-163 (GE), Ser-192, 215-217 (SLN), and Asn-291 contribute to the S-adenosyl-L-methionine site. The active-site S-methylcysteine intermediate is the Cys-334.

Belongs to the radical SAM superfamily. RlmN family. It depends on [4Fe-4S] cluster as a cofactor.

It is found in the cytoplasm. The enzyme catalyses adenosine(2503) in 23S rRNA + 2 reduced [2Fe-2S]-[ferredoxin] + 2 S-adenosyl-L-methionine = 2-methyladenosine(2503) in 23S rRNA + 5'-deoxyadenosine + L-methionine + 2 oxidized [2Fe-2S]-[ferredoxin] + S-adenosyl-L-homocysteine. It catalyses the reaction adenosine(37) in tRNA + 2 reduced [2Fe-2S]-[ferredoxin] + 2 S-adenosyl-L-methionine = 2-methyladenosine(37) in tRNA + 5'-deoxyadenosine + L-methionine + 2 oxidized [2Fe-2S]-[ferredoxin] + S-adenosyl-L-homocysteine. Its function is as follows. Specifically methylates position 2 of adenine 2503 in 23S rRNA and position 2 of adenine 37 in tRNAs. The polypeptide is Probable dual-specificity RNA methyltransferase RlmN (Koribacter versatilis (strain Ellin345)).